A 432-amino-acid chain; its full sequence is Eukaryotic translation initiation factor 3 subunit E (432 aa).

The PCI domain maps to 221–401 (VYYNYPKGRD…MGVKSVSIHE (181 aa)).

It belongs to the eIF-3 subunit E family. As to quaternary structure, component of the eukaryotic translation initiation factor 3 (eIF-3) complex.

The protein resides in the cytoplasm. In terms of biological role, component of the eukaryotic translation initiation factor 3 (eIF-3) complex, which is involved in protein synthesis of a specialized repertoire of mRNAs and, together with other initiation factors, stimulates binding of mRNA and methionyl-tRNAi to the 40S ribosome. The eIF-3 complex specifically targets and initiates translation of a subset of mRNAs involved in cell proliferation. This Caenorhabditis elegans protein is Eukaryotic translation initiation factor 3 subunit E.